The chain runs to 641 residues: ATP-dependent zinc metalloprotease FtsH (641 aa).

At 1 to 16 the chain is on the cytoplasmic side; it reads MNKQQKPKRSPLRPDY. Residues 17–37 form a helical membrane-spanning segment; sequence LVIVIIILLAIGMYFFFTEMM. At 38–131 the chain is on the extracellular side; that stretch reads APKVKQFDEF…VSFVPHVSVD (94 aa). A helical membrane pass occupies residues 132 to 152; the sequence is FWNIISTLLLIAAPIVLVVIM. At 153–641 the chain is on the cytoplasmic side; that stretch reads FRSMSSQSNK…EVEEDSKKSE (489 aa). 222-229 serves as a coordination point for ATP; the sequence is GQPGTGKT. Zn(2+) is bound at residue His444. The active site involves Glu445. His448 and Asp520 together coordinate Zn(2+).

It in the central section; belongs to the AAA ATPase family. In the C-terminal section; belongs to the peptidase M41 family. As to quaternary structure, homohexamer. Requires Zn(2+) as cofactor.

It is found in the cell membrane. Functionally, acts as a processive, ATP-dependent zinc metallopeptidase for both cytoplasmic and membrane proteins. Plays a role in the quality control of integral membrane proteins. The protein is ATP-dependent zinc metalloprotease FtsH of Acholeplasma laidlawii (strain PG-8A).